The following is a 394-amino-acid chain: Fatty acid resistance protein FarA (394 aa).

The tract at residues 1–23 (MKSGNSEPNLMETHTDETKLQNT) is disordered. The chain crosses the membrane as a helical span at residues 33 to 53 (ALTLLFALSAAAAGSAFFLWW). Residues 356 to 376 (SAAGAPVSKTPGAALPEMEST) are disordered.

This sequence belongs to the membrane fusion protein (MFP) (TC 8.A.1) family. Probably part of a tripartite efflux system FarAB-MtrE, which is composed of an inner membrane transporter, FarB, a periplasmic membrane fusion protein, FarA, and an outer membrane component, MtrE.

The protein localises to the cell inner membrane. Functionally, mediates resistance to long-chained antibacterial fatty acids (FAs). Function is dependent on the MtrE outer membrane protein. In Neisseria gonorrhoeae, this protein is Fatty acid resistance protein FarA.